A 122-amino-acid polypeptide reads, in one-letter code: Ribosome-binding factor A (122 aa).

Belongs to the RbfA family. As to quaternary structure, monomer. Binds 30S ribosomal subunits, but not 50S ribosomal subunits or 70S ribosomes.

The protein resides in the cytoplasm. Functionally, one of several proteins that assist in the late maturation steps of the functional core of the 30S ribosomal subunit. Associates with free 30S ribosomal subunits (but not with 30S subunits that are part of 70S ribosomes or polysomes). Required for efficient processing of 16S rRNA. May interact with the 5'-terminal helix region of 16S rRNA. This is Ribosome-binding factor A from Syntrophomonas wolfei subsp. wolfei (strain DSM 2245B / Goettingen).